Consider the following 237-residue polypeptide: Probable transcriptional regulatory protein EAT1b_0153 (237 aa).

Belongs to the TACO1 family. YeeN subfamily.

The protein localises to the cytoplasm. The protein is Probable transcriptional regulatory protein EAT1b_0153 of Exiguobacterium sp. (strain ATCC BAA-1283 / AT1b).